Here is a 298-residue protein sequence, read N- to C-terminus: Acetylglutamate kinase (298 aa).

Residues 69 to 70 (GG), R91, and N196 contribute to the substrate site.

It belongs to the acetylglutamate kinase family. ArgB subfamily.

The protein localises to the cytoplasm. The catalysed reaction is N-acetyl-L-glutamate + ATP = N-acetyl-L-glutamyl 5-phosphate + ADP. The protein operates within amino-acid biosynthesis; L-arginine biosynthesis; N(2)-acetyl-L-ornithine from L-glutamate: step 2/4. Its function is as follows. Catalyzes the ATP-dependent phosphorylation of N-acetyl-L-glutamate. The polypeptide is Acetylglutamate kinase (Rhodopseudomonas palustris (strain ATCC BAA-98 / CGA009)).